The chain runs to 502 residues: Nucleoside transporter 2 (502 aa).

Topologically, residues 1-30 are cytoplasmic; the sequence is MTTSSDSAMVNHTPSPWYKFGFKSFAEFNT. A helical transmembrane segment spans residues 31-51; the sequence is YVTFVFLGMSIMMVASAVTSA. At 52–81 the chain is on the extracellular side; the sequence is PDFLTRYYVYATGDPDAVAETPLFWNNANT. The helical transmembrane segment at 82-102 threads the bilayer; that stretch reads FYNAGTYVLQVLTELFSLTPF. The Cytoplasmic segment spans residues 103 to 111; sequence MRRIPLSVR. The helical transmembrane segment at 112 to 132 threads the bilayer; the sequence is LFVGLGIPFAELLLIIIVPAA. The Extracellular segment spans residues 133-137; the sequence is TIKSQ. Residues 138-158 traverse the membrane as a helical segment; it reads HGAIAVIMVVACVGGFSKALC. Residues 159-178 lie on the Cytoplasmic side of the membrane; the sequence is DSCTNALVGPFPTKFMNGAQ. A helical membrane pass occupies residues 179-199; sequence WGLTVIALLMSIIQIILKVSM. Over 200–210 the chain is Extracellular; it reads GTSFHDILTMS. The helical transmembrane segment at 211 to 231 threads the bilayer; sequence RIYFGICIGIQLFAIFELAIL. Residues 232 to 352 lie on the Cytoplasmic side of the membrane; the sequence is RFNPFAQKYI…SVFKRVYPML (121 aa). The interval 252 to 273 is disordered; that stretch reads AQNNESTLEETAPSMNEPAAGD. The chain crosses the membrane as a helical span at residues 353 to 373; sequence VCVFLIYFTSLLTFPGVFFLV. Residues 374–380 are Extracellular-facing; it reads STTSGWY. The chain crosses the membrane as a helical span at residues 381-401; the sequence is MTVIVTLFNAGDFISRMVLMF. The Cytoplasmic segment spans residues 402–408; the sequence is RPLRPSP. Residues 409 to 429 traverse the membrane as a helical segment; that stretch reads KVVVAGTLGRLIIIPFLVLCV. Over 430-436 the chain is Extracellular; that stretch reads RGIIRGE. A helical membrane pass occupies residues 437–457; that stretch reads ALPYVLITLLGLTNGYFGCMA. Over 458–477 the chain is Cytoplasmic; it reads CIHCPRTTTLRYAGERSLAA. The helical transmembrane segment at 478-498 threads the bilayer; that stretch reads MLSGISIMLGLCFGSNLSLAI. At 499 to 502 the chain is on the extracellular side; sequence TLTH.

It belongs to the SLC29A/ENT transporter (TC 2.A.57) family.

It is found in the cell membrane. The catalysed reaction is inosine(in) = inosine(out). The enzyme catalyses guanosine(in) = guanosine(out). Functionally, high affinity transporter for inosine and guanosine. The chain is Nucleoside transporter 2 from Crithidia fasciculata.